The primary structure comprises 512 residues: N-fatty-acyl-amino acid synthase/hydrolase PM20D1 (512 aa).

Positions 1 to 34 (MAVSRWKAVGSTLLAAFLVGLVVLIAVLLIRTYT) are cleaved as a signal peptide. N-linked (GlcNAc...) asparagine glycosylation is found at asparagine 45 and asparagine 81. Histidine 134 contributes to the Zn(2+) binding site. Aspartate 136 is a catalytic residue. Zn(2+) is bound at residue aspartate 166. Glutamate 200 (proton acceptor) is an active-site residue. The Zn(2+) site is built by glutamate 201 and aspartate 227. N-linked (GlcNAc...) asparagine glycosylation is present at asparagine 450. Histidine 472 contributes to the Zn(2+) binding site.

It belongs to the peptidase M20A family.

It localises to the secreted. It carries out the reaction an N-acyl-L-amino acid + H2O = an L-alpha-amino acid + a carboxylate. The catalysed reaction is an N-acyl-aromatic L-alpha-amino acid + H2O = an aromatic L-alpha-amino acid + a carboxylate. The enzyme catalyses N-(5Z,8Z,11Z,14Z)-eicosatetraenoyl-glycine + H2O = (5Z,8Z,11Z,14Z)-eicosatetraenoate + glycine. It catalyses the reaction N-hexadecanoyl-L-phenylalanine + H2O = hexadecanoate + L-phenylalanine. It carries out the reaction N-octadecanoyl-L-phenylalanine + H2O = octadecanoate + L-phenylalanine. The catalysed reaction is N-(4Z,7Z,10Z,13Z,16Z,19Z-docosahexaenoyl)-L-phenylalanine + H2O = (4Z,7Z,10Z,13Z,16Z,19Z)-docosahexaenoate + L-phenylalanine. The enzyme catalyses N-(9Z-octadecenoyl)-L-asparagine + H2O = L-asparagine + (9Z)-octadecenoate. It catalyses the reaction (9Z)-octadecenoate + glycine = N-(9Z-octadecenoyl)glycine + H2O. It carries out the reaction N-(9Z-octadecenoyl)-L-lysine + H2O = L-lysine + (9Z)-octadecenoate. The catalysed reaction is N-(9Z-octadecenoyl)-L-methionine + H2O = (9Z)-octadecenoate + L-methionine. The enzyme catalyses N-(9Z-octadecenoyl)-L-serine + H2O = L-serine + (9Z)-octadecenoate. It catalyses the reaction N-(9Z-octadecenoyl)-L-tryptophan + H2O = L-tryptophan + (9Z)-octadecenoate. It carries out the reaction N-(9Z-octadecenoyl)-L-tyrosine + H2O = L-tyrosine + (9Z)-octadecenoate. The catalysed reaction is N-(9Z-octadecenoyl)-L-glutamine + H2O = L-glutamine + (9Z)-octadecenoate. The enzyme catalyses N-(5Z,8Z,11Z,14Z-eicosatetraenoyl)-L-serine + H2O = (5Z,8Z,11Z,14Z)-eicosatetraenoate + L-serine. It catalyses the reaction (5Z,8Z,11Z,14Z)-eicosatetraenoate + L-phenylalanine = N-(5Z,8Z,11Z,14Z-eicosatetraenoyl)-L-phenylalanine + H2O. It carries out the reaction N-(9Z-octadecenoyl)-L-leucine + H2O = L-leucine + (9Z)-octadecenoate. The catalysed reaction is L-phenylalanine + (9Z)-octadecenoate = N-(9Z-octadecenoyl)-L-phenylalanine + H2O. Its pathway is amino-acid metabolism. The protein operates within energy metabolism; electron transfer. It functions in the pathway lipid metabolism; fatty acid metabolism. Lipoproteins are powerful coactivators of PM20D1 activity in vitro and NAA biosynthesis in vivo. Its function is as follows. Secreted enzyme that regulates the endogenous N-fatty acyl amino acid (NAAs) tissue and circulating levels by functioning as a bidirectional NAA synthase/hydrolase. It condenses free fatty acids and free amino acids to generate NAAs and bidirectionally catalyzes the reverse hydrolysis reaction. Some of these NAAs stimulate oxidative metabolism via mitochondrial uncoupling, increasing energy expenditure in a UPC1-independent manner. Thereby, this secreted protein may indirectly regulate whole body energy expenditure. PM20D1 circulates in tight association with both low- and high-density (LDL and HDL,respectively) lipoprotein particles. The polypeptide is N-fatty-acyl-amino acid synthase/hydrolase PM20D1 (Xenopus tropicalis (Western clawed frog)).